Consider the following 445-residue polypeptide: C-terminal-binding protein 2 (445 aa).

Arginine 22 is modified (asymmetric dimethylarginine). NAD(+) contacts are provided by residues serine 106, 186 to 191 (IGFGRT), aspartate 210, 243 to 249 (CNLNEHN), 270 to 272 (AAR), and aspartate 296. The active site involves arginine 272. Glutamate 301 is a catalytic residue. The active-site Proton donor is the histidine 321. NAD(+) is bound at residue 321–324 (HTAW). The segment at 414 to 445 (THNLPTVAHPSQAPSPNQPTKHGDNREHPNEQ) is disordered. Phosphoserine is present on serine 428. Positions 434-445 (KHGDNREHPNEQ) are enriched in basic and acidic residues.

Belongs to the D-isomer specific 2-hydroxyacid dehydrogenase family. As to quaternary structure, can form homodimers or heterodimers of CTBP1 and CTBP2. Interacts with HIPK2 and ZNF217. Interacts with PRDM16; represses white adipose tissue (WAT)-specific genes expression. Interacts with PNN, NRIP1 and WIZ. Interacts with MCRIP1. In terms of assembly, (Microbial infection) Interacts with human adenovirus 5 E1A protein; this interaction seems to potentiate viral replication. As to expression, ubiquitous. Highest levels in heart, skeletal muscle, and pancreas.

The protein resides in the nucleus. Its subcellular location is the synapse. Corepressor targeting diverse transcription regulators. Functions in brown adipose tissue (BAT) differentiation. Its function is as follows. Isoform 2 probably acts as a scaffold for specialized synapses. This chain is C-terminal-binding protein 2 (CTBP2), found in Homo sapiens (Human).